The chain runs to 463 residues: Fumarate hydratase class II (463 aa).

Substrate is bound by residues 98–100 (SGT), 129–132 (HPND), 139–141 (SSN), and threonine 187. Histidine 188 (proton donor/acceptor) is an active-site residue. Serine 318 is an active-site residue. Residues serine 319 and 324-326 (KVN) each bind substrate.

It belongs to the class-II fumarase/aspartase family. Fumarase subfamily. As to quaternary structure, homotetramer.

The protein resides in the cytoplasm. The catalysed reaction is (S)-malate = fumarate + H2O. It participates in carbohydrate metabolism; tricarboxylic acid cycle; (S)-malate from fumarate: step 1/1. Involved in the TCA cycle. Catalyzes the stereospecific interconversion of fumarate to L-malate. The sequence is that of Fumarate hydratase class II from Rickettsia bellii (strain RML369-C).